The sequence spans 270 residues: Ribosomal RNA small subunit methyltransferase A (270 aa).

Residues Asn-18, Leu-20, Gly-45, Glu-66, Asp-91, and Asn-112 each coordinate S-adenosyl-L-methionine.

It belongs to the class I-like SAM-binding methyltransferase superfamily. rRNA adenine N(6)-methyltransferase family. RsmA subfamily.

The protein resides in the cytoplasm. It catalyses the reaction adenosine(1518)/adenosine(1519) in 16S rRNA + 4 S-adenosyl-L-methionine = N(6)-dimethyladenosine(1518)/N(6)-dimethyladenosine(1519) in 16S rRNA + 4 S-adenosyl-L-homocysteine + 4 H(+). Its function is as follows. Specifically dimethylates two adjacent adenosines (A1518 and A1519) in the loop of a conserved hairpin near the 3'-end of 16S rRNA in the 30S particle. May play a critical role in biogenesis of 30S subunits. This is Ribosomal RNA small subunit methyltransferase A from Shewanella piezotolerans (strain WP3 / JCM 13877).